A 75-amino-acid chain; its full sequence is UPF0270 protein PP_1747 (75 aa).

Belongs to the UPF0270 family.

The polypeptide is UPF0270 protein PP_1747 (Pseudomonas putida (strain ATCC 47054 / DSM 6125 / CFBP 8728 / NCIMB 11950 / KT2440)).